Reading from the N-terminus, the 41-residue chain is Large ribosomal subunit protein bL36 (41 aa).

This sequence belongs to the bacterial ribosomal protein bL36 family.

The polypeptide is Large ribosomal subunit protein bL36 (Gluconacetobacter diazotrophicus (strain ATCC 49037 / DSM 5601 / CCUG 37298 / CIP 103539 / LMG 7603 / PAl5)).